Consider the following 413-residue polypeptide: Serine--tRNA ligase (413 aa).

221–223 (TAE) serves as a coordination point for L-serine. An ATP-binding site is contributed by 252–254 (RRE). E275 is a binding site for L-serine. 339–342 (EVSS) provides a ligand contact to ATP. S375 is an L-serine binding site.

The protein belongs to the class-II aminoacyl-tRNA synthetase family. Type-1 seryl-tRNA synthetase subfamily. Homodimer. The tRNA molecule binds across the dimer.

The protein localises to the cytoplasm. It catalyses the reaction tRNA(Ser) + L-serine + ATP = L-seryl-tRNA(Ser) + AMP + diphosphate + H(+). The catalysed reaction is tRNA(Sec) + L-serine + ATP = L-seryl-tRNA(Sec) + AMP + diphosphate + H(+). It participates in aminoacyl-tRNA biosynthesis; selenocysteinyl-tRNA(Sec) biosynthesis; L-seryl-tRNA(Sec) from L-serine and tRNA(Sec): step 1/1. Its function is as follows. Catalyzes the attachment of serine to tRNA(Ser). Is also able to aminoacylate tRNA(Sec) with serine, to form the misacylated tRNA L-seryl-tRNA(Sec), which will be further converted into selenocysteinyl-tRNA(Sec). The polypeptide is Serine--tRNA ligase (Dehalococcoides mccartyi (strain ATCC BAA-2100 / JCM 16839 / KCTC 5957 / BAV1)).